We begin with the raw amino-acid sequence, 73 residues long: Sec-independent protein translocase protein TatA (73 aa).

A helical transmembrane segment spans residues 1–21; that stretch reads MFGLGAPELILILILALIIFG. Residues 52-73 are disordered; that stretch reads EAAKIDDGNNNSDKEKATRQAS.

It belongs to the TatA/E family. Forms a complex with TatC.

It is found in the cell membrane. In terms of biological role, part of the twin-arginine translocation (Tat) system that transports large folded proteins containing a characteristic twin-arginine motif in their signal peptide across membranes. TatA could form the protein-conducting channel of the Tat system. This chain is Sec-independent protein translocase protein TatA, found in Moorella thermoacetica (strain ATCC 39073 / JCM 9320).